A 62-amino-acid polypeptide reads, in one-letter code: UPF0434 protein BP2767 (62 aa).

It belongs to the UPF0434 family.

The sequence is that of UPF0434 protein BP2767 from Bordetella pertussis (strain Tohama I / ATCC BAA-589 / NCTC 13251).